Consider the following 134-residue polypeptide: UPF0412 protein YaaI (134 aa).

A signal peptide spans 1–23 (MKSVFTISASLAISLMLCCTAQA).

It belongs to the UPF0412 family.

In Escherichia coli (strain ATCC 8739 / DSM 1576 / NBRC 3972 / NCIMB 8545 / WDCM 00012 / Crooks), this protein is UPF0412 protein YaaI.